Here is a 333-residue protein sequence, read N- to C-terminus: Phenylalanine--tRNA ligase alpha subunit (333 aa).

Glu248 provides a ligand contact to Mg(2+).

The protein belongs to the class-II aminoacyl-tRNA synthetase family. Phe-tRNA synthetase alpha subunit type 1 subfamily. Tetramer of two alpha and two beta subunits. The cofactor is Mg(2+).

It localises to the cytoplasm. It catalyses the reaction tRNA(Phe) + L-phenylalanine + ATP = L-phenylalanyl-tRNA(Phe) + AMP + diphosphate + H(+). The chain is Phenylalanine--tRNA ligase alpha subunit from Ureaplasma urealyticum serovar 10 (strain ATCC 33699 / Western).